The primary structure comprises 792 residues: 5-methyltetrahydropteroyltriglutamate--homocysteine methyltransferase (792 aa).

5-methyltetrahydropteroyltri-L-glutamate contacts are provided by residues 16–19 (RELK) and Lys-112. Residues 432–434 (IGS) and Glu-485 contribute to the L-homocysteine site. Residues 432-434 (IGS) and Glu-485 contribute to the L-methionine site. 5-methyltetrahydropteroyltri-L-glutamate contacts are provided by residues 516–517 (RC) and Trp-562. Position 600 (Asp-600) interacts with L-homocysteine. An L-methionine-binding site is contributed by Asp-600. Residue Glu-606 participates in 5-methyltetrahydropteroyltri-L-glutamate binding. Positions 642, 644, and 666 each coordinate Zn(2+). Catalysis depends on His-695, which acts as the Proton donor. A Zn(2+)-binding site is contributed by Cys-727.

The protein belongs to the vitamin-B12 independent methionine synthase family. It depends on Zn(2+) as a cofactor.

The catalysed reaction is 5-methyltetrahydropteroyltri-L-glutamate + L-homocysteine = tetrahydropteroyltri-L-glutamate + L-methionine. Its pathway is amino-acid biosynthesis; L-methionine biosynthesis via de novo pathway; L-methionine from L-homocysteine (MetE route): step 1/1. Its function is as follows. Catalyzes the transfer of a methyl group from 5-methyltetrahydrofolate to homocysteine resulting in methionine formation. In Cupriavidus necator (strain ATCC 17699 / DSM 428 / KCTC 22496 / NCIMB 10442 / H16 / Stanier 337) (Ralstonia eutropha), this protein is 5-methyltetrahydropteroyltriglutamate--homocysteine methyltransferase.